Consider the following 1029-residue polypeptide: Cilia- and flagella-associated protein 91 (1029 aa).

2 disordered regions span residues 72 to 97 and 117 to 170; these read NYRP…GPNR and PPSQ…PWEP. Residues 272-299 are a coiled coil; the sequence is LELLDNALQVREEELDDENRLRVEARKE. A compositionally biased stretch (low complexity) spans 837–854; that stretch reads ENQDQQEPQPQPQPSSSS. 2 disordered regions span residues 837-861 and 876-1029; these read ENQD…DLAD and GEPS…EAAE. The span at 890–910 shows a compositional bias: acidic residues; it reads QQLEADAEAEAEAEAEAEAGA. Over residues 911 to 921 the composition is skewed to low complexity; that stretch reads EAEASAQAGAE. The segment covering 922–932 has biased composition (acidic residues); it reads AEAEAGVEAEA. The span at 933 to 944 shows a compositional bias: low complexity; sequence EASAGAEASVGA. Residues 964–982 show a composition bias toward acidic residues; it reads PEAEAEAEAGAEAEAENGA. Residues 984 to 999 show a composition bias toward basic and acidic residues; it reads AEARLGGEEEGFREGE. Residues 1000 to 1015 show a composition bias toward gly residues; that stretch reads GQGGAAAGEAGPGGEL. Acidic residues predominate over residues 1016-1029; the sequence is AEGEGEAGEGEAAE.

The protein belongs to the CFAP91 family. As to quaternary structure, identified in a spoke-associated complex containing CFAP61, CFAP91 and CFAP251; the complex is associated with the radial spokes of the axoneme. The complex associates with Calmodulin; the association is calcium sensitive. Interacts with RSP3.

It is found in the cytoplasm. Its subcellular location is the cytoskeleton. The protein localises to the flagellum axoneme. As component of a spoke-associated complex, regulates flagellar dynein activity by mediating regulatory signals between the radial spokes and dynein arms. This Chlamydomonas reinhardtii (Chlamydomonas smithii) protein is Cilia- and flagella-associated protein 91.